Reading from the N-terminus, the 239-residue chain is Ribonuclease PH (239 aa).

Residues Arg86 and 124–126 (GTR) contribute to the phosphate site.

Belongs to the RNase PH family. Homohexameric ring arranged as a trimer of dimers.

The enzyme catalyses tRNA(n+1) + phosphate = tRNA(n) + a ribonucleoside 5'-diphosphate. Its function is as follows. Phosphorolytic 3'-5' exoribonuclease that plays an important role in tRNA 3'-end maturation. Removes nucleotide residues following the 3'-CCA terminus of tRNAs; can also add nucleotides to the ends of RNA molecules by using nucleoside diphosphates as substrates, but this may not be physiologically important. Probably plays a role in initiation of 16S rRNA degradation (leading to ribosome degradation) during starvation. The sequence is that of Ribonuclease PH from Sinorhizobium medicae (strain WSM419) (Ensifer medicae).